The chain runs to 248 residues: MSHTAKMASTFNNFYEISNVEVGQHFYWQLGSFQVHAQVLITSWIVIAILLSLAVLATRNLQTIPMGGQNFVEYVLEFIRDLTRTQIGEEEYRPWVPFIGTMFLFIFVSNWSGALFPWRVFELPNGELAAPTNDINTTVALALLTSVAYFYAGLHKKGLSYFGKYIQPTPVLLPINILEDFTKPLSLSFRLFGNILADELVVAVLISLVPLVVPIPMMFLGLFTSAIQALIFATLAAAYIGESMEGHH.

5 helical membrane-spanning segments follow: residues 37–57 (AQVL…AVLA), 96–116 (VPFI…GALF), 135–155 (INTT…AGLH), 200–220 (LVVA…MMFL), and 221–241 (GLFT…AYIG).

The protein belongs to the ATPase A chain family. F-type ATPases have 2 components, CF(1) - the catalytic core - and CF(0) - the membrane proton channel. CF(1) has five subunits: alpha(3), beta(3), gamma(1), delta(1), epsilon(1). CF(0) has four main subunits: a, b, b' and c.

Its subcellular location is the plastid. It is found in the chloroplast thylakoid membrane. In terms of biological role, key component of the proton channel; it plays a direct role in the translocation of protons across the membrane. The chain is ATP synthase subunit a, chloroplastic from Marchantia polymorpha (Common liverwort).